We begin with the raw amino-acid sequence, 888 residues long: MLSRLFRMHGLFVASHPWEVIVGTVTLTICMMSMNMFTGNNKICGWNYECPKLEEDVLSSDIIILTITRCIAILYIYFQFQNLRQLGSKYILGIAGLFTIFSSFVFSTVVIHFLDKELTGLNEALPFFLLLVDLSRASALAKFALSSNSQDEVRENIARGMAILGPTFTLDALVECLVIGVGTMSGVRQLEIMCCFGCMSVLANYFVFMTFFPACVSLVLELSRESREGRPIWQLSHFARVLEEEENKPNPVTQRVKMIMSLGLVLVHAHSRWIADPSPQNSTADNSKVSLGLDENVSKRIEPSVSLWQFYLSKMISMDIEQVITLSLALLLAVKYIFFEQAETESTLSLKNPITSPVVTQKKITDDCCRRDPVLVRNDQKFHAMEEETRKNRERKVEVIKPLLAENDTSHRATFVVGNSSLLGTSLELETQEPEMELPVEPRPNEECLQILENAEKGAKFLSDAEIIQLVNAKHIPAYKLETLMETHERGVSIRRQLLSKKLPEPSSLQYLPYRDYNYSLVMGACCENVIGYMPIPVGVAGPLCLDGKEFQVPMATTEGCLVASTNRGCRAIGLGGGASSRVLADGMTRGPVVRFPRACDSAEVKAWLETPEGFTVIKEAFDSTSRFARLQKLHMSVAGRNLYIRFQSRSGDAMGMNMISKGTEKALSKLQEYFPEMQILAVSGNYCTDKKPAAINWIEGRGKSVVCEAVIPAKVVREVLKTTTEAMIEVNINKNLVGSAMAGSIGGYNAHAANIVTAIYIACGQDAAQNVGSSNCITLMEASGPTNEDLYISCTMPSIEIGTVGGGTNLLPQQACLQMLGVQGACRDNPGENARQLARIVCGTVMAGELSLMAALAAGHLVRSHMIHNRSKINLQDLQGTCTKKAA.

Topologically, residues 1-9 are cytoplasmic; sequence MLSRLFRMH. A helical transmembrane segment spans residues 10–39; that stretch reads GLFVASHPWEVIVGTVTLTICMMSMNMFTG. At 40–56 the chain is on the lumenal side; the sequence is NNKICGWNYECPKLEED. The helical transmembrane segment at 57 to 78 threads the bilayer; sequence VLSSDIIILTITRCIAILYIYF. One can recognise an SSD domain in the interval 61 to 218; that stretch reads DIIILTITRC…MTFFPACVSL (158 aa). Positions 75-78 match the INSIG-binding motif motif; sequence YIYF. The Cytoplasmic portion of the chain corresponds to 79–89; sequence QFQNLRQLGSK. Lys-89 participates in a covalent cross-link: Glycyl lysine isopeptide (Lys-Gly) (interchain with G-Cter in ubiquitin). The chain crosses the membrane as a helical span at residues 90 to 114; the sequence is YILGIAGLFTIFSSFVFSTVVIHFL. The Lumenal portion of the chain corresponds to 115–123; it reads DKELTGLNE. Residues 124 to 149 form a helical membrane-spanning segment; the sequence is ALPFFLLLVDLSRASALAKFALSSNS. The Cytoplasmic portion of the chain corresponds to 150-159; that stretch reads QDEVRENIAR. The helical transmembrane segment at 160-187 threads the bilayer; the sequence is GMAILGPTFTLDALVECLVIGVGTMSGV. The Lumenal segment spans residues 188–191; the sequence is RQLE. A helical membrane pass occupies residues 192-220; it reads IMCCFGCMSVLANYFVFMTFFPACVSLVL. Over 221 to 248 the chain is Cytoplasmic; sequence ELSRESREGRPIWQLSHFARVLEEEENK. Lys-248 participates in a covalent cross-link: Glycyl lysine isopeptide (Lys-Gly) (interchain with G-Cter in ubiquitin). Residues 249 to 275 traverse the membrane as a helical segment; that stretch reads PNPVTQRVKMIMSLGLVLVHAHSRWIA. Over 276–314 the chain is Lumenal; that stretch reads DPSPQNSTADNSKVSLGLDENVSKRIEPSVSLWQFYLSK. Residues Asn-281 and Asn-296 are each glycosylated (N-linked (GlcNAc...) asparagine). Residues 315–339 form a helical membrane-spanning segment; that stretch reads MISMDIEQVITLSLALLLAVKYIFF. Residues 340 to 888 are Cytoplasmic-facing; sequence EQAETESTLS…LQGTCTKKAA (549 aa). Residues Glu-559, Lys-691, and Asp-767 each act as charge relay system in the active site. Catalysis depends on His-866, which acts as the Proton donor. Ser-872 carries the post-translational modification Phosphoserine; by AMPK.

The protein belongs to the HMG-CoA reductase family. Homotetramer. Homodimer. Interacts (via its SSD) with INSIG1; the interaction, accelerated by sterols, leads to the recruitment of HMGCR to AMFR/gp78 for its ubiquitination by the sterol-mediated ERAD pathway. Interacts with UBIAD1. Post-translationally, undergoes sterol-mediated ubiquitination and ER-associated degradation (ERAD). Accumulation of sterols in the endoplasmic reticulum (ER) membrane, triggers binding of the reductase to the ER membrane protein INSIG1 or INSIG2. The INSIG1 binding leads to the recruitment of the ubiquitin ligase, AMFR/gp78, RNF139 or RNF145, initiating ubiquitination of the reductase. The ubiquitinated reductase is then extracted from the ER membrane and delivered to cytosolic 26S proteosomes by a mechanism probably mediated by the ATPase Valosin-containing protein VCP/p97. The INSIG2-binding leads to the recruitment of the ubiquitin ligase RNF139, initiating ubiquitination of the reductase. Lys-248 is the main site of ubiquitination. Ubiquitination is enhanced by the presence of a geranylgeranylated protein. In terms of processing, N-glycosylated. Deglycosylated by NGLY1 on release from the endoplasmic reticulum (ER) in a sterol-mediated manner. Phosphorylated. Phosphorylation at Ser-872 reduces the catalytic activity.

Its subcellular location is the endoplasmic reticulum membrane. It localises to the peroxisome membrane. The enzyme catalyses (R)-mevalonate + 2 NADP(+) + CoA = (3S)-3-hydroxy-3-methylglutaryl-CoA + 2 NADPH + 2 H(+). The protein operates within metabolic intermediate biosynthesis; (R)-mevalonate biosynthesis; (R)-mevalonate from acetyl-CoA: step 3/3. Regulated by a negative feedback mechanism through sterols and non-sterol metabolites derived from mevalonate. Phosphorylation at Ser-872 down-regulates the catalytic activity. Functionally, catalyzes the conversion of (3S)-hydroxy-3-methylglutaryl-CoA (HMG-CoA) to mevalonic acid, the rate-limiting step in the synthesis of cholesterol and other isoprenoids, thus plays a critical role in cellular cholesterol homeostasis. The protein is 3-hydroxy-3-methylglutaryl-coenzyme A reductase (HMGCR) of Bos taurus (Bovine).